A 99-amino-acid chain; its full sequence is Endothelin receptor type B (99 aa).

Topologically, residues 1–8 are extracellular; sequence PFGAEMCK. Cysteine 7 and cysteine 88 are disulfide-bonded. A helical membrane pass occupies residues 9–30; that stretch reads LVPFIQKASVGITVLSLCALSI. The Cytoplasmic segment spans residues 31–51; it reads DRYRAVASWSRIKGIGIPKWT. A helical membrane pass occupies residues 52–76; sequence AVEIVLIWVVSVVLAVPEAIGFDMI. Topologically, residues 77 to 99 are extracellular; it reads TMDYKGSYLRICLLHPVQKTAFM.

This sequence belongs to the G-protein coupled receptor 1 family. Endothelin receptor subfamily. EDNRB sub-subfamily.

It localises to the cell membrane. Functionally, non-specific receptor for endothelin 1, 2, and 3. Mediates its action by association with G proteins that activate a phosphatidylinositol-calcium second messenger system. This Macaca fascicularis (Crab-eating macaque) protein is Endothelin receptor type B (EDNRB).